The sequence spans 860 residues: Leucine--tRNA ligase (860 aa).

The short motif at 42–52 (PYPSGRLHMGH) is the 'HIGH' region element. A 'KMSKS' region motif is present at residues 619–623 (KMSKS). Lysine 622 is an ATP binding site.

It belongs to the class-I aminoacyl-tRNA synthetase family.

It localises to the cytoplasm. The enzyme catalyses tRNA(Leu) + L-leucine + ATP = L-leucyl-tRNA(Leu) + AMP + diphosphate. The protein is Leucine--tRNA ligase of Escherichia coli (strain SE11).